We begin with the raw amino-acid sequence, 78 residues long: Translational regulator CsrA (78 aa).

This sequence belongs to the CsrA/RsmA family. Homodimer; the beta-strands of each monomer intercalate to form a hydrophobic core, while the alpha-helices form wings that extend away from the core.

The protein resides in the cytoplasm. A translational regulator that binds mRNA to regulate translation initiation and/or mRNA stability. Usually binds in the 5'-UTR at or near the Shine-Dalgarno sequence preventing ribosome-binding, thus repressing translation. Its main target seems to be the major flagellin gene, while its function is anatagonized by FliW. The chain is Translational regulator CsrA from Borrelia recurrentis (strain A1).